Here is a 379-residue protein sequence, read N- to C-terminus: Probable malonyl-CoA-acyl carrier protein transacylase, mitochondrial (379 aa).

The transit peptide at 1 to 23 directs the protein to the mitochondrion; the sequence is MLAARRLLRSPRITGALSWSRWS. Active-site residues include Ser-158 and His-275.

This sequence belongs to the type II malonyltransferase family.

Its subcellular location is the mitochondrion. It catalyses the reaction holo-[ACP] + malonyl-CoA = malonyl-[ACP] + CoA. The protein operates within lipid metabolism; fatty acid biosynthesis. Functionally, catalyzes the transfer of a malonyl moiety from malonyl-CoA to the free thiol group of the phosphopantetheine arm of the ACP protein. This suggests the existence of the biosynthesis of fatty acids in mitochondria. This chain is Probable malonyl-CoA-acyl carrier protein transacylase, mitochondrial, found in Drosophila melanogaster (Fruit fly).